Consider the following 337-residue polypeptide: tRNA N(3)-cytidine methyltransferase METTL2 (337 aa).

Residues tryptophan 66, tyrosine 70, glycine 140, aspartate 165, aspartate 191, and isoleucine 212 each coordinate S-adenosyl-L-methionine.

This sequence belongs to the methyltransferase superfamily. METL family. Monomer.

It is found in the cytoplasm. It catalyses the reaction cytidine(32) in tRNA(Thr) + S-adenosyl-L-methionine = N(3)-methylcytidine(32) in tRNA(Thr) + S-adenosyl-L-homocysteine + H(+). It carries out the reaction cytidine(32) in tRNA(Arg)(CCU) + S-adenosyl-L-methionine = N(3)-methylcytidine(32) in tRNA(Arg)(CCU) + S-adenosyl-L-homocysteine + H(+). S-adenosyl-L-methionine-dependent methyltransferase that mediates N(3)-methylcytidine modification of residue 32 of the tRNA anticodon loop of tRNA(Thr)(UGU) and tRNA(Arg)(CCU). N(3)-methylcytidine methylation by mettl2 requires the N6-threonylcarbamoylation of tRNA (t6A37) by the EKC/KEOPS complex as prerequisite. The sequence is that of tRNA N(3)-cytidine methyltransferase METTL2 (mettl2) from Xenopus tropicalis (Western clawed frog).